The primary structure comprises 171 residues: Protein hunchback (171 aa).

2 disordered regions span residues 14 to 93 and 124 to 171; these read PMSH…PMQI and SNDK…KYMA. Basic residues predominate over residues 17-31; the sequence is HHHHHSHHSHGHHHS. 2 stretches are compositionally biased toward low complexity: residues 32 to 42 and 52 to 80; these read NSNSNASSPRQ and SSSN…DTPL. Over residues 152–171 the composition is skewed to basic and acidic residues; the sequence is EPEKDHDLMSNSSEDMKYMA.

Belongs to the hunchback C2H2-type zinc-finger protein family.

It is found in the nucleus. Functionally, gap class segmentation protein that controls development of head structures. The sequence is that of Protein hunchback (hb) from Scaptomyza albovittata (Fruit fly).